A 282-amino-acid chain; its full sequence is MIRVIAISNPRLAQAFIDYMATHQVHLTMRPSHDGQHVELWLEDDTKLTLVQQELEQFTRDPLNERYQAASWQSGDVNHPLKYHNNLNWQYLSRQAGPLTLTILLLNIVVYLWMQFAGDYQVMSWLAWPNDSQHMELWRWVTHGLLHFSLLHIIFNLMWWWYLGGQTEKHLGTGKLFVIMIVSAVFSGWGQSLFSGSHFGGLSGVVYALIGYVWLTGERAPERGIGVPRGLMAFSLFWLIVGYFDAFGLSIANAAHFSGLIIGLLMALWDNRHTFKNNNRHF.

Helical transmembrane passes span 96-116, 144-164, 176-196, 197-217, 225-242, and 247-269; these read AGPLTLTILLLNIVVYLWMQF, GLLHFSLLHIIFNLMWWWYLG, LFVIMIVSAVFSGWGQSLFSG, SHFGGLSGVVYALIGYVWLTG, IGVPRGLMAFSLFWLIVG, and FGLSIANAAHFSGLIIGLLMALW. Ser203 serves as the catalytic Nucleophile. The active site involves His256.

The protein belongs to the peptidase S54 family.

The protein resides in the cell inner membrane. It carries out the reaction Cleaves type-1 transmembrane domains using a catalytic dyad composed of serine and histidine that are contributed by different transmembrane domains.. Its function is as follows. Rhomboid-type serine protease that catalyzes intramembrane proteolysis. The polypeptide is Rhomboid protease GlpG (Photorhabdus laumondii subsp. laumondii (strain DSM 15139 / CIP 105565 / TT01) (Photorhabdus luminescens subsp. laumondii)).